Reading from the N-terminus, the 1026-residue chain is Lon protease homolog, mitochondrial (1026 aa).

The N-terminal 29 residues, 1 to 29 (MLGTRVTRAVYTRAPLKLQLRALGLHRRY), are a transit peptide targeting the mitochondrion. Disordered regions lie at residues 29–55 (YVHNGSKNDEGSSTSTTTNKEENDKKL) and 185–206 (ASEETKDEETVDKTESATDKVS). A Lon N-terminal domain is found at 62 to 345 (MLALPISRRP…KSLLVLKKEL (284 aa)). Over residues 185-194 (ASEETKDEET) the composition is skewed to acidic residues. The span at 195 to 206 (VDKTESATDKVS) shows a compositional bias: basic and acidic residues. Residue 497–504 (GPPGVGKT) coordinates ATP. The tract at residues 711–785 (TEPLVSTSEE…EEEEDTSMIV (75 aa)) is disordered. Residues 714–737 (LVSTSEEPQLSQTNQNISSSSAED) show a composition bias toward polar residues. The Lon proteolytic domain occupies 815 to 1001 (TTPPGVIMGL…DDIYKRLFSG (187 aa)). Catalysis depends on residues Ser907 and Lys950.

Belongs to the peptidase S16 family. Homohexamer or homoheptamer. Organized in a ring with a central cavity.

Its subcellular location is the mitochondrion matrix. It catalyses the reaction Hydrolysis of proteins in presence of ATP.. Functionally, ATP-dependent serine protease that mediates the selective degradation of misfolded, unassembled or oxidatively damaged polypeptides as well as certain short-lived regulatory proteins in the mitochondrial matrix. May also have a chaperone function in the assembly of inner membrane protein complexes. Participates in the regulation of mitochondrial gene expression and in the maintenance of the integrity of the mitochondrial genome. Binds to mitochondrial DNA in a site-specific manner. This chain is Lon protease homolog, mitochondrial, found in Candida glabrata (strain ATCC 2001 / BCRC 20586 / JCM 3761 / NBRC 0622 / NRRL Y-65 / CBS 138) (Yeast).